The primary structure comprises 62 residues: MTCYNQQSSEAKTTTTCSGGVSSCYKKTWSDIRGTIIERGCGCPSVKKGIERICCRTDKCNN.

Positions 1–20 (MTCYNQQSSEAKTTTTCSGG) are disordered. 4 disulfide bridges follow: Cys-3-Cys-24, Cys-17-Cys-41, Cys-43-Cys-54, and Cys-55-Cys-60.

Belongs to the three-finger toxin family. Short-chain subfamily. Type I alpha-neurotoxin sub-subfamily. Expressed by the venom gland.

It is found in the secreted. In terms of biological role, binds to muscle nicotinic acetylcholine receptor (nAChR) and inhibit acetylcholine from binding to the receptor, thereby impairing neuromuscular transmission. The sequence is that of Short neurotoxin 2 from Oxyuranus scutellatus scutellatus (Australian taipan).